Here is a 199-residue protein sequence, read N- to C-terminus: Tumor necrosis factor ligand superfamily member 4 (199 aa).

The Cytoplasmic portion of the chain corresponds to 1-25; that stretch reads MEGEGVQPPDENLENGSRPRFKWKK. Residues 26 to 48 form a helical; Signal-anchor for type II membrane protein membrane-spanning segment; the sequence is VLRLVVSGIKAAGLLLCVVYVCL. Over 49-199 the chain is Extracellular; sequence QFSSSPAKDS…YSSTVNQVPL (151 aa). The 118-residue stretch at 59-176 folds into the THD domain; the sequence is PIQRLRAPVT…QINDGELIIV (118 aa). Intrachain disulfides connect cysteine 70–cysteine 163 and cysteine 98–cysteine 184. 2 N-linked (GlcNAc...) asparagine glycosylation sites follow: asparagine 91 and asparagine 157.

This sequence belongs to the tumor necrosis factor family. As to quaternary structure, homotrimer. Detected in T-cell lines, but not in a macrophage cell line.

The protein resides in the membrane. Functionally, cytokine that binds to TNFRSF4. Co-stimulates T-cell proliferation and cytokine production. This is Tumor necrosis factor ligand superfamily member 4 (Tnfsf4) from Rattus norvegicus (Rat).